Reading from the N-terminus, the 250-residue chain is MSDASSTILFEYPLNEKTRTWLRIESLSQQLHQNHSLTDMGSALTFFRAIAELLDVLERGDVRTELLKELERQQQKLLQWSDVPGVDMERIHSLRRQLKDLSSTLMAAPRMGQFLREDRLIGMVRQRLGIPGGCCSFDLPTLHSWLHQPKELREQLVFSWLNSLSPLKQALDMILELIRHSGTFRPQTSLNGFFQDNASDADLLRLRLEQMHQLYPQISGHKTRYAIRFLPLDSENGHIPPRLTFELACC.

The protein belongs to the ZapD family. As to quaternary structure, interacts with FtsZ.

The protein localises to the cytoplasm. Cell division factor that enhances FtsZ-ring assembly. Directly interacts with FtsZ and promotes bundling of FtsZ protofilaments, with a reduction in FtsZ GTPase activity. This chain is Cell division protein ZapD, found in Pectobacterium atrosepticum (strain SCRI 1043 / ATCC BAA-672) (Erwinia carotovora subsp. atroseptica).